We begin with the raw amino-acid sequence, 25 residues long: Acyl carrier protein (25 aa).

Residues 2 to 25 (ESIEQRVKKIVAEQLGVAEAEIKA) enclose the Carrier domain.

This sequence belongs to the acyl carrier protein (ACP) family. In terms of processing, 4'-phosphopantetheine is transferred from CoA to a specific serine of apo-ACP by AcpS. This modification is essential for activity because fatty acids are bound in thioester linkage to the sulfhydryl of the prosthetic group.

The protein resides in the cytoplasm. It functions in the pathway lipid metabolism; fatty acid biosynthesis. In terms of biological role, carrier of the growing fatty acid chain in fatty acid biosynthesis. The protein is Acyl carrier protein (acpP) of Alcaligenes faecalis.